Here is an 804-residue protein sequence, read N- to C-terminus: Leucine--tRNA ligase (804 aa).

The 'HIGH' region motif lies at 39 to 50 (PFPSGKGLHVGH). Residues 573 to 577 (KMSKS) carry the 'KMSKS' region motif. Lys-576 lines the ATP pocket.

This sequence belongs to the class-I aminoacyl-tRNA synthetase family.

The protein localises to the cytoplasm. The enzyme catalyses tRNA(Leu) + L-leucine + ATP = L-leucyl-tRNA(Leu) + AMP + diphosphate. The protein is Leucine--tRNA ligase of Lactobacillus acidophilus (strain ATCC 700396 / NCK56 / N2 / NCFM).